We begin with the raw amino-acid sequence, 320 residues long: MRLGPRPAALGLLLPLLLYAAVAGASKAEELHYPQGEHRADYDREALLGVQEDVDEYVKLGHEEQQRRLQSIIKKIDSDSDGFLTENELSQWIQMSFKHYAMQEAKQQFVEYDKNSDGAVTWDEYNIQMYDRVIDFDENTALDDTEEGSFRQLHLKDKKRFEKANQDSGPGLSLEEFIAFEHPEEVDYMTEFVIQEALEEHDKNGDGFVSLEEFLGDYRRDPTANEDPEWILVEKDRFVNDYDKDNDGRLDPQELLSWVVPNNQGIAQEEALHLIDEMDLNSDKKLSEEEILENQDLFLTSEATDYGRQLHDDYFYHDEL.

The signal sequence occupies residues 1–25 (MRLGPRPAALGLLLPLLLYAAVAGA). EF-hand domains follow at residues 64-99 (EQQR…SFKH) and 100-135 (YAMQ…RVID). 8 residues coordinate Ca(2+): aspartate 77, aspartate 79, aspartate 81, glutamate 88, aspartate 113, asparagine 115, aspartate 117, and glutamate 124. The residue at position 140 (threonine 140) is a Phosphothreonine. 4 EF-hand domains span residues 150–185 (FRQL…HPEE), 189–224 (MTEF…DPTA), 230–265 (WILV…NNQG), and 266–301 (IAQE…FLTS). Ca(2+)-binding residues include aspartate 167, glutamate 176, aspartate 202, asparagine 204, aspartate 206, glutamate 213, aspartate 243, aspartate 245, aspartate 247, arginine 249, glutamate 254, aspartate 279, asparagine 281, aspartate 283, lysine 285, and glutamate 290. A Prevents secretion from ER motif is present at residues 317–320 (HDEL).

This sequence belongs to the CREC family.

It is found in the endoplasmic reticulum lumen. Functionally, not known. Binds calcium. The protein is Reticulocalbin-2 (Rcn2) of Mus musculus (Mouse).